Reading from the N-terminus, the 519-residue chain is Acetylcholine receptor subunit gamma (519 aa).

The signal sequence occupies residues 1–22 (MQGGQRPHLLLLLLAVCLGAQS). Topologically, residues 23–240 (RNQEERLLAD…VVFYLLIQRK (218 aa)) are extracellular. N-linked (GlcNAc...) asparagine glycosylation is found at N52 and N163. C150 and C164 are oxidised to a cystine. Helical transmembrane passes span 241 to 265 (PLFYVINIIAPCVLISSVAILIYFL), 274 to 292 (CTVATNVLLAQTVFLFLVA), and 308 to 329 (YLTFLMVVTILIVVNSVVVLNV). The Cytoplasmic segment spans residues 330–476 (SLRSPHTHSM…WLLVGRVLDR (147 aa)). A helical transmembrane segment spans residues 477–497 (VCFLAMLSLFICGTAGIFLMA).

It belongs to the ligand-gated ion channel (TC 1.A.9) family. Acetylcholine receptor (TC 1.A.9.1) subfamily. Gamma/CHRNG sub-subfamily. As to quaternary structure, pentamer of two alpha chains, and one each of the beta, delta, and gamma (in immature muscle) or epsilon (in mature muscle) chains. In terms of tissue distribution, at least in myotubes of skeletal muscle.

It localises to the postsynaptic cell membrane. Its subcellular location is the cell membrane. It carries out the reaction K(+)(in) = K(+)(out). The catalysed reaction is Na(+)(in) = Na(+)(out). In terms of biological role, after binding acetylcholine, the AChR responds by an extensive change in conformation that affects all subunits and leads to opening of an ion-conducting channel across the plasma membrane. This is Acetylcholine receptor subunit gamma (Chrng) from Mus musculus (Mouse).